The chain runs to 2283 residues: AT-rich interactive domain-containing protein 1A (2283 aa).

Residues 1-10 (MAAQVAPAAA) show a composition bias toward low complexity. Disordered stretches follow at residues 1–333 (MAAQ…PADM), 346–822 (AAAA…LPNA), and 979–1006 (ATKM…TTTN). Residue Ala-2 is modified to N-acetylalanine. Residues 22–34 (ELKKAEQQQREEA) show a composition bias toward basic and acidic residues. 2 positions are modified to phosphoserine: Ser-56 and Ser-77. A compositionally biased stretch (gly residues) spans 77 to 93 (SNGGGGGGGAGSGGGPG). Composition is skewed to low complexity over residues 128-143 (SSSD…AAAA) and 233-266 (SSPR…SSSS). Ser-234 carries the phosphoserine modification. The span at 274–287 (AMGGGGPSAAGGGT) shows a compositional bias: gly residues. Thr-287 is subject to Phosphothreonine. The LXXLL signature appears at 296–300 (LNQLL). Residues 296–307 (LNQLLTSPSSAR) show a composition bias toward polar residues. Position 302 is a phosphoserine (Ser-302). The segment covering 311 to 328 (GYPGGDYGGGPQDGGAGK) has biased composition (gly residues). Ser-365 and Ser-384 each carry phosphoserine. Residues 402–427 (PYSQQQGPPSGPQQGHGYPGQPYGSQ) show a composition bias toward low complexity. Residue Arg-431 is modified to Asymmetric dimethylarginine. 2 stretches are compositionally biased toward polar residues: residues 438–451 (GRAQ…SYAQ) and 459–470 (QGPSAYGQQGQT). Low complexity-rich tracts occupy residues 471 to 547 (PYYN…QHPQ) and 554 to 596 (QPQA…YSQQ). The residue at position 605 (Ser-605) is a Phosphoserine. Low complexity predominate over residues 611 to 622 (SQASSAPSMTSS). The span at 629 to 638 (MNLSLQSRPS) shows a compositional bias: polar residues. Over residues 659 to 675 (SPGVSTSGISSSQGEQS) the composition is skewed to low complexity. Polar residues predominate over residues 676–686 (NPAQSPFSPHT). Phosphoserine is present on residues Ser-697, Ser-699, Ser-703, Ser-731, Ser-765, and Ser-773. Polar residues-rich tracts occupy residues 731–748 (SGQS…SSIA) and 756–794 (RNPQ…QNSM). Residues 795 to 822 (GSYGPQGSQYGPQGGYPRQPNYNALPNA) are compositionally biased toward low complexity. The 92-residue stretch at 1018 to 1109 (EPERKMWVDR…CLYAFECKIE (92 aa)) folds into the ARID domain. Disordered stretches follow at residues 1114 to 1484 (PPPD…MMGG) and 1539 to 1636 (RANH…PPMI). The span at 1142–1155 (MQGPQTPQSTSSSM) shows a compositional bias: low complexity. Positions 1163 to 1178 (PPTPASTPHSQIPPLP) are enriched in pro residues. Position 1185 is a phosphoserine (Ser-1185). Residues 1198–1220 (PTFQKRNSMTPNPGYQPSMNTSD) show a composition bias toward polar residues. Ser-1236 is modified (phosphoserine). At Arg-1277 the chain carries Omega-N-methylarginine. The segment covering 1343–1368 (QFSTQGTPSSSPFPSQQTTMYQQQQQ) has biased composition (low complexity). Positions 1369-1388 (NYKRPMDGTYGPPAKRHEGE) match the Nuclear localization signal motif. Positions 1395–1426 (SAGQGQPQQQQLPAAQSQPASQPQAAQPSPQQ) are enriched in low complexity. Polar residues-rich tracts occupy residues 1427 to 1436 (DVYNQYSNAY) and 1469 to 1478 (PGSSAQQNMP). A compositionally biased stretch (pro residues) spans 1555-1579 (PYGPSAPVPPMTRPPPSNYQPPPSM). Ser-1605 bears the Phosphoserine mark. Lys-1613 bears the N6-acetyllysine mark. The short motif at 1710 to 1714 (LPGLL) is the LXXLL element. Disordered stretches follow at residues 1757–1782 (PAHT…GVGN), 1872–1904 (CPTP…PEKR), and 1917–1941 (SSTL…PFGI). The segment covering 1761-1782 (EEEEEEHLDPKLEEEEEEGVGN) has biased composition (acidic residues). Thr-1874 and Thr-1886 each carry phosphothreonine. Residues 1882–1893 (TVEGTPGTTEQE) show a composition bias toward low complexity. Position 1903 is an N6-acetyllysine (Lys-1903). Residues 1923-1935 (EGAKSAEATKESS) are compositionally biased toward basic and acidic residues. Ser-1927 and Ser-1942 each carry phosphoserine. 2 consecutive short sequence motifs (LXXLL) follow at residues 1965 to 1969 (LCTLL) and 2083 to 2087 (LDGLL).

Component of SWI/SNF chromatin remodeling complexes, in some of which it can be mutually exclusive with ARID1B/BAF250B. The canonical complex contains a catalytic subunit (either SMARCA4/BRG1/BAF190A or SMARCA2/BRM/BAF190B) and at least SMARCE1, ACTL6A/BAF53, SMARCC1/BAF155, SMARCC2/BAF170, and SMARCB1/SNF5/BAF47. Other subunits specific to each of the complexes may also be present permitting several possible combinations developmentally and tissue specific. Component of the BAF (SWI/SNF-A) complex, which includes at least actin (ACTB), ARID1A/BAF250A, ARID1B/BAF250B, SMARCA2/BRM, SMARCA4/BRG1/BAF190A, ACTL6A/BAF53, ACTL6B/BAF53B, SMARCE1/BAF57, SMARCC1/BAF155, SMARCC2/BAF170, SMARCB1/SNF5/INI1, and one or more SMARCD1/BAF60A, SMARCD2/BAF60B, or SMARCD3/BAF60C. In muscle cells, the BAF complex also contains DPF3. Component of neural progenitors-specific chromatin remodeling complex (npBAF complex) composed of at least, ARID1A/BAF250A or ARID1B/BAF250B, SMARCD1/BAF60A, SMARCD3/BAF60C, SMARCA2/BRM/BAF190B, SMARCA4/BRG1/BAF190A, SMARCB1/BAF47, SMARCC1/BAF155, SMARCE1/BAF57, SMARCC2/BAF170, PHF10/BAF45A, ACTL6A/BAF53A and actin. Component of neuron-specific chromatin remodeling complex (nBAF complex) composed of at least, ARID1A/BAF250A or ARID1B/BAF250B, SMARCD1/BAF60A, SMARCD3/BAF60C, SMARCA2/BRM/BAF190B, SMARCA4/BRG1/BAF190A, SMARCB1/BAF47, SMARCC1/BAF155, SMARCE1/BAF57, SMARCC2/BAF170, DPF1/BAF45B, DPF3/BAF45C, ACTL6B/BAF53B and actin. Component of a SWI/SNF-like EBAFa complex, at least composed of SMARCA4/BRG1/BAF190A, SMARCB1/BAF47/SNF5, ACTL6A/BAF53A, SMARCE1/BAF57, SMARCD1/BAF60A, SMARCC1/BAF155, SMARCC2/BAF170, BAF250A and MLLT1/ENL. Interacts through its C-terminus with SMARCA2/BRM/BAF190B and SMARCA4/BRG1/BAF190A. Interacts with SMARCC1/BAF155. Interacts with FOS (via bZIP domain and leucine-zipper region), FOSB isoform 1 and 2, FOSL1 and FOSL2. In terms of tissue distribution, widely expressed. Expressed at high levels in the testis.

It localises to the nucleus. Its function is as follows. Involved in transcriptional activation and repression of select genes by chromatin remodeling (alteration of DNA-nucleosome topology). Component of SWI/SNF chromatin remodeling complexes that carry out key enzymatic activities, changing chromatin structure by altering DNA-histone contacts within a nucleosome in an ATP-dependent manner. Binds DNA non-specifically. Belongs to the neural progenitors-specific chromatin remodeling complex (npBAF complex) and the neuron-specific chromatin remodeling complex (nBAF complex). During neural development a switch from a stem/progenitor to a postmitotic chromatin remodeling mechanism occurs as neurons exit the cell cycle and become committed to their adult state. The transition from proliferating neural stem/progenitor cells to postmitotic neurons requires a switch in subunit composition of the npBAF and nBAF complexes. As neural progenitors exit mitosis and differentiate into neurons, npBAF complexes which contain ACTL6A/BAF53A and PHF10/BAF45A, are exchanged for homologous alternative ACTL6B/BAF53B and DPF1/BAF45B or DPF3/BAF45C subunits in neuron-specific complexes (nBAF). The npBAF complex is essential for the self-renewal/proliferative capacity of the multipotent neural stem cells. The nBAF complex along with CREST plays a role regulating the activity of genes essential for dendrite growth. The polypeptide is AT-rich interactive domain-containing protein 1A (Arid1a) (Mus musculus (Mouse)).